The following is a 542-amino-acid chain: Polysialoglycoprotein (542 aa).

Residues 1–21 (MIMGGVRELLLVVMTVGVVKV) form the signal peptide. The propeptide occupies 22-120 (SCYPVGKSQK…TSEAATGPSG (99 aa)). The disordered stretch occupies residues 70 to 542 (EEYLETNEVE…GPSGDDAMDI (473 aa)). Over residues 78–95 (VESQASPNHGSSPANDAL) the composition is skewed to polar residues. Residues 97–106 (SEEKLRRVSS) are compositionally biased toward basic and acidic residues. Residues 107–116 (DDAATSEAAT) are compositionally biased toward low complexity. Tandem repeats lie at residues 121-133 (DDAT…GPSG), 134-146 (DDAT…GPSG), 147-159 (DDAT…GPSG), 160-172 (DDAT…GPSG), 173-185 (DDAT…GPSG), 186-198 (DDAT…GPSG), 199-211 (DDAT…GPSG), 212-224 (DDAT…GPSG), 225-237 (DDAT…GPSG), 238-250 (DDAT…GPSG), 251-263 (DDAT…GPSG), 264-276 (DDAT…GPSG), 277-289 (DDAT…GPSG), 290-302 (DDAT…GPSG), 303-315 (DDAT…GPSG), 316-328 (DDAT…GPSG), 329-341 (DDAT…GPSG), 342-354 (DDAT…GPSG), 355-367 (DDAT…GPSG), 368-380 (DDAT…GPSG), 381-393 (DDAT…GPSG), 394-406 (DDAT…GPSG), 407-419 (DDAT…GPSG), 420-432 (DDAT…GPSG), 433-445 (DDAT…GPSG), 446-458 (DDAT…GPSG), 459-471 (DDAT…GPSG), 472-484 (DDAT…GPSG), 485-497 (DDAT…GPSG), 498-510 (DDAT…GPSG), 511-523 (DDAT…GPSG), and 524-536 (DDAT…GPSG). A 32 X 13 AA tandem repeats of D-D-A-T-S-E-A-A-T-G-P-S-G region spans residues 121-536 (DDATSEAATG…TSEAATGPSG (416 aa)). T124 is a glycosylation site (O-linked (GalNAc...) threonine). An O-linked (GalNAc...) serine glycan is attached at S125. 2 O-linked (GalNAc...) threonine glycosylation sites follow: T129 and T137. O-linked (GalNAc...) serine glycosylation occurs at S138. 2 O-linked (GalNAc...) threonine glycosylation sites follow: T142 and T150. O-linked (GalNAc...) serine glycosylation is present at S151. T155 and T163 each carry an O-linked (GalNAc...) threonine glycan. The O-linked (GalNAc...) serine glycan is linked to S164. Residues T168 and T176 are each glycosylated (O-linked (GalNAc...) threonine). The O-linked (GalNAc...) serine glycan is linked to S177. O-linked (GalNAc...) threonine glycans are attached at residues T181 and T189. O-linked (GalNAc...) serine glycosylation occurs at S190. T194 and T202 each carry an O-linked (GalNAc...) threonine glycan. The O-linked (GalNAc...) serine glycan is linked to S203. O-linked (GalNAc...) threonine glycans are attached at residues T207 and T215. O-linked (GalNAc...) serine glycosylation occurs at S216. 2 O-linked (GalNAc...) threonine glycosylation sites follow: T220 and T228. A glycan (O-linked (GalNAc...) serine) is linked at S229. O-linked (GalNAc...) threonine glycans are attached at residues T233 and T241. S242 is a glycosylation site (O-linked (GalNAc...) serine). T246 and T254 each carry an O-linked (GalNAc...) threonine glycan. O-linked (GalNAc...) serine glycosylation is present at S255. Residues T259 and T267 are each glycosylated (O-linked (GalNAc...) threonine). An O-linked (GalNAc...) serine glycan is attached at S268. T272 and T280 each carry an O-linked (GalNAc...) threonine glycan. O-linked (GalNAc...) serine glycosylation occurs at S281. T285 and T293 each carry an O-linked (GalNAc...) threonine glycan. The O-linked (GalNAc...) serine glycan is linked to S294. O-linked (GalNAc...) threonine glycosylation is found at T298 and T306. Residue S307 is glycosylated (O-linked (GalNAc...) serine). Residues T311 and T319 are each glycosylated (O-linked (GalNAc...) threonine). Residue S320 is glycosylated (O-linked (GalNAc...) serine). O-linked (GalNAc...) threonine glycosylation is found at T324 and T332. The O-linked (GalNAc...) serine glycan is linked to S333. O-linked (GalNAc...) threonine glycans are attached at residues T337 and T345. An O-linked (GalNAc...) serine glycan is attached at S346. O-linked (GalNAc...) threonine glycans are attached at residues T350 and T358. An O-linked (GalNAc...) serine glycan is attached at S359. O-linked (GalNAc...) threonine glycans are attached at residues T363 and T371. O-linked (GalNAc...) serine glycosylation is present at S372. O-linked (GalNAc...) threonine glycosylation is found at T376 and T384. S385 carries O-linked (GalNAc...) serine glycosylation. 2 O-linked (GalNAc...) threonine glycosylation sites follow: T389 and T397. An O-linked (GalNAc...) serine glycan is attached at S398. 2 O-linked (GalNAc...) threonine glycosylation sites follow: T402 and T410. S411 carries an O-linked (GalNAc...) serine glycan. O-linked (GalNAc...) threonine glycosylation is found at T415 and T423. O-linked (GalNAc...) serine glycosylation is present at S424. O-linked (GalNAc...) threonine glycans are attached at residues T428 and T436. O-linked (GalNAc...) serine glycosylation occurs at S437. O-linked (GalNAc...) threonine glycans are attached at residues T441 and T449. O-linked (GalNAc...) serine glycosylation occurs at S450. 2 O-linked (GalNAc...) threonine glycosylation sites follow: T454 and T462. O-linked (GalNAc...) serine glycosylation is present at S463. 2 O-linked (GalNAc...) threonine glycosylation sites follow: T467 and T475. S476 carries O-linked (GalNAc...) serine glycosylation. O-linked (GalNAc...) threonine glycans are attached at residues T480 and T488. O-linked (GalNAc...) serine glycosylation occurs at S489. O-linked (GalNAc...) threonine glycosylation is found at T493 and T501. S502 is a glycosylation site (O-linked (GalNAc...) serine). 2 O-linked (GalNAc...) threonine glycosylation sites follow: T506 and T514. S515 carries O-linked (GalNAc...) serine glycosylation. O-linked (GalNAc...) threonine glycosylation is found at T519 and T527. A glycan (O-linked (GalNAc...) serine) is linked at S528. An O-linked (GalNAc...) threonine glycan is attached at T532. The propeptide occupies 537–542 (DDAMDI).

Most sialic acid residues exist in the form of polysialyl groups partly capped with deaminoneuraminic acid. As to expression, cortical alveoli of immature ovaries.

Functionally, in response to egg activation, PSGP is discharged by exocytosis into the perivitelline space, where it undergoes rapid proteolysis into glycotridecapeptides. During fertilization and/or early development the glycotridecapeptides prevent polyspermy or are involved in the formation of a fertilization membrane. The protein is Polysialoglycoprotein of Oncorhynchus mykiss (Rainbow trout).